The sequence spans 475 residues: Ribulose bisphosphate carboxylase large chain (475 aa).

The propeptide occupies 1 to 2 (MS). At P3 the chain carries N-acetylproline. K14 bears the N6,N6,N6-trimethyllysine mark. Substrate-binding residues include N123 and T173. The Proton acceptor role is filled by K175. A substrate-binding site is contributed by K177. Mg(2+) contacts are provided by K201, D203, and E204. N6-carboxylysine is present on K201. The active-site Proton acceptor is the H294. Positions 295, 327, and 379 each coordinate substrate.

It belongs to the RuBisCO large chain family. Type I subfamily. As to quaternary structure, heterohexadecamer of 8 large chains and 8 small chains. Mg(2+) serves as cofactor.

The protein resides in the plastid. It is found in the chloroplast. The enzyme catalyses 2 (2R)-3-phosphoglycerate + 2 H(+) = D-ribulose 1,5-bisphosphate + CO2 + H2O. The catalysed reaction is D-ribulose 1,5-bisphosphate + O2 = 2-phosphoglycolate + (2R)-3-phosphoglycerate + 2 H(+). Its function is as follows. RuBisCO catalyzes two reactions: the carboxylation of D-ribulose 1,5-bisphosphate, the primary event in carbon dioxide fixation, as well as the oxidative fragmentation of the pentose substrate in the photorespiration process. Both reactions occur simultaneously and in competition at the same active site. The polypeptide is Ribulose bisphosphate carboxylase large chain (Huperzia lucidula (Shining clubmoss)).